Reading from the N-terminus, the 116-residue chain is Ribonuclease T (116 aa).

The region spanning 18–99 (KRAILVGHNS…YDTEKTAELF (82 aa)) is the Exonuclease domain. His-86 serves as the catalytic Proton donor/acceptor.

This sequence belongs to the RNase T family. In terms of assembly, homodimer.

Functionally, trims short 3' overhangs of a variety of RNA species, leaving a one or two nucleotide 3' overhang. Responsible for the end-turnover of tRNA: specifically removes the terminal AMP residue from uncharged tRNA (tRNA-C-C-A). Also appears to be involved in tRNA biosynthesis. This is Ribonuclease T from Azotobacter vinelandii.